The primary structure comprises 400 residues: Cartilage-associated protein (400 aa).

Positions Met1–Gly25 are cleaved as a signal peptide. N-linked (GlcNAc...) asparagine glycosylation is found at Asn86 and Asn362.

This sequence belongs to the leprecan family. As to expression, found in articular chondrocytes. Expressed in a variety of tissues.

It is found in the secreted. It localises to the extracellular space. Its subcellular location is the extracellular matrix. Its function is as follows. Necessary for efficient 3-hydroxylation of fibrillar collagen prolyl residues. In Mus musculus (Mouse), this protein is Cartilage-associated protein (Crtap).